A 156-amino-acid polypeptide reads, in one-letter code: Small ribosomal subunit protein uS7 (156 aa).

Belongs to the universal ribosomal protein uS7 family. Part of the 30S ribosomal subunit. Contacts proteins S9 and S11.

Functionally, one of the primary rRNA binding proteins, it binds directly to 16S rRNA where it nucleates assembly of the head domain of the 30S subunit. Is located at the subunit interface close to the decoding center, probably blocks exit of the E-site tRNA. The polypeptide is Small ribosomal subunit protein uS7 (Acinetobacter baumannii (strain AB307-0294)).